Reading from the N-terminus, the 432-residue chain is Tol-Pal system protein TolB (432 aa).

Residues 1 to 21 form the signal peptide; the sequence is MKHVRIFATLLALLVISVTPA.

This sequence belongs to the TolB family. In terms of assembly, the Tol-Pal system is composed of five core proteins: the inner membrane proteins TolA, TolQ and TolR, the periplasmic protein TolB and the outer membrane protein Pal. They form a network linking the inner and outer membranes and the peptidoglycan layer.

It is found in the periplasm. Part of the Tol-Pal system, which plays a role in outer membrane invagination during cell division and is important for maintaining outer membrane integrity. The sequence is that of Tol-Pal system protein TolB from Geobacter sulfurreducens (strain ATCC 51573 / DSM 12127 / PCA).